A 126-amino-acid chain; its full sequence is Aspartate 1-decarboxylase (126 aa).

Catalysis depends on Ser25, which acts as the Schiff-base intermediate with substrate; via pyruvic acid. Ser25 carries the pyruvic acid (Ser) modification. Thr57 lines the substrate pocket. The Proton donor role is filled by Tyr58. Substrate is bound at residue 73–75; sequence GGA.

It belongs to the PanD family. In terms of assembly, heterooctamer of four alpha and four beta subunits. Requires pyruvate as cofactor. In terms of processing, is synthesized initially as an inactive proenzyme, which is activated by self-cleavage at a specific serine bond to produce a beta-subunit with a hydroxyl group at its C-terminus and an alpha-subunit with a pyruvoyl group at its N-terminus.

The protein localises to the cytoplasm. The catalysed reaction is L-aspartate + H(+) = beta-alanine + CO2. Its pathway is cofactor biosynthesis; (R)-pantothenate biosynthesis; beta-alanine from L-aspartate: step 1/1. In terms of biological role, catalyzes the pyruvoyl-dependent decarboxylation of aspartate to produce beta-alanine. The chain is Aspartate 1-decarboxylase from Xylella fastidiosa (strain M12).